A 139-amino-acid chain; its full sequence is Small ribosomal subunit protein uS12m (139 aa).

Residues 1–21 (MLSTLYQNDLKKKRNRRRNRS) form a disordered region. The segment covering 11-20 (KKKRNRRRNR) has biased composition (basic residues).

This sequence belongs to the universal ribosomal protein uS12 family.

The protein resides in the mitochondrion. Functionally, protein S12 is involved in the translation initiation step. The polypeptide is Small ribosomal subunit protein uS12m (RPS12) (Paramecium tetraurelia).